The following is a 119-amino-acid chain: Beta-2-microglobulin (119 aa).

An N-terminal signal peptide occupies residues 1–20 (MARFVVVPLFVLLSLFGLEA). The 90-residue stretch at 25–114 (PKIQVYSRYP…VTFSTPKTVK (90 aa)) folds into the Ig-like C1-type domain. Cys45 and Cys100 form a disulfide bridge.

The protein belongs to the beta-2-microglobulin family. In terms of assembly, heterodimer of an alpha chain and a beta chain. Beta-2-microglobulin is the beta-chain of major histocompatibility complex class I molecules.

The protein localises to the secreted. Component of the class I major histocompatibility complex (MHC). Involved in the presentation of peptide antigens to the immune system. This chain is Beta-2-microglobulin (B2M), found in Saguinus niger (Black tamarin).